The primary structure comprises 113 residues: Ig heavy chain V-III region U61 (113 aa).

An Ig-like domain is found at 1 to 113 (EVKLEESGGG…YWGQGTLVPV (113 aa)). A disulfide bridge links Cys22 with Cys98.

The sequence is that of Ig heavy chain V-III region U61 from Mus musculus (Mouse).